A 383-amino-acid chain; its full sequence is 2-aminoethylphosphonate--pyruvate transaminase (383 aa).

The residue at position 192 (Lys-192) is an N6-(pyridoxal phosphate)lysine.

This sequence belongs to the class-V pyridoxal-phosphate-dependent aminotransferase family. PhnW subfamily. As to quaternary structure, homodimer. It depends on pyridoxal 5'-phosphate as a cofactor.

The enzyme catalyses (2-aminoethyl)phosphonate + pyruvate = phosphonoacetaldehyde + L-alanine. In terms of biological role, involved in phosphonate degradation. The polypeptide is 2-aminoethylphosphonate--pyruvate transaminase (Rhizobium meliloti (strain 1021) (Ensifer meliloti)).